A 79-amino-acid chain; its full sequence is Protein OPG081 (79 aa).

Topologically, residues 1–8 are intravirion; that stretch reads MVDAITVL. A helical transmembrane segment spans residues 9–29; the sequence is TAIGITVLMLLMVISGAAMIV. The Virion surface portion of the chain corresponds to 30–47; that stretch reads KELNPNDIFTMQSLKFNR. Residues 48 to 68 traverse the membrane as a helical segment; it reads AVTIFKYIGLFIYIPGTIILY. Residues 69 to 79 are Intravirion-facing; that stretch reads ATYVKSLLMKS.

It belongs to the orthopoxvirus OPG081 family.

The protein resides in the virion membrane. Its function is as follows. Envelope protein. This Vaccinia virus (strain Copenhagen) (VACV) protein is Protein OPG081 (OPG081).